Consider the following 96-residue polypeptide: DNA/RNA-binding protein Alba (96 aa).

The protein belongs to the histone-like Alba family.

Its subcellular location is the cytoplasm. The protein localises to the chromosome. Functionally, binds double-stranded DNA tightly but without sequence specificity. Involved in DNA compaction. This Methanocella arvoryzae (strain DSM 22066 / NBRC 105507 / MRE50) protein is DNA/RNA-binding protein Alba.